The sequence spans 273 residues: Dermonecrotic toxin LapSicTox-alphaIB2 (273 aa).

Histidine 5 is a catalytic residue. Mg(2+) contacts are provided by glutamate 25 and aspartate 27. Residue histidine 41 is the Nucleophile of the active site. Cystine bridges form between cysteine 45-cysteine 51 and cysteine 47-cysteine 190. Position 85 (aspartate 85) interacts with Mg(2+). Asparagine 250 is a glycosylation site (N-linked (GlcNAc...) asparagine).

This sequence belongs to the arthropod phospholipase D family. Class II subfamily. Mg(2+) is required as a cofactor. Expressed by the venom gland.

It is found in the secreted. The enzyme catalyses an N-(acyl)-sphingosylphosphocholine = an N-(acyl)-sphingosyl-1,3-cyclic phosphate + choline. It catalyses the reaction an N-(acyl)-sphingosylphosphoethanolamine = an N-(acyl)-sphingosyl-1,3-cyclic phosphate + ethanolamine. The catalysed reaction is a 1-acyl-sn-glycero-3-phosphocholine = a 1-acyl-sn-glycero-2,3-cyclic phosphate + choline. It carries out the reaction a 1-acyl-sn-glycero-3-phosphoethanolamine = a 1-acyl-sn-glycero-2,3-cyclic phosphate + ethanolamine. In terms of biological role, dermonecrotic toxins cleave the phosphodiester linkage between the phosphate and headgroup of certain phospholipids (sphingolipid and lysolipid substrates), forming an alcohol (often choline) and a cyclic phosphate. This toxin acts on sphingomyelin (SM). It may also act on ceramide phosphoethanolamine (CPE), lysophosphatidylcholine (LPC) and lysophosphatidylethanolamine (LPE), but not on lysophosphatidylserine (LPS), and lysophosphatidylglycerol (LPG). It acts by transphosphatidylation, releasing exclusively cyclic phosphate products as second products. Induces dermonecrosis, hemolysis, increased vascular permeability, edema, inflammatory response, and platelet aggregation. The chain is Dermonecrotic toxin LapSicTox-alphaIB2 from Loxosceles apachea (Apache recluse spider).